We begin with the raw amino-acid sequence, 242 residues long: ATP synthase subunit a, organellar chromatophore (242 aa).

5 helical membrane passes run 28-48, 89-109, 128-148, 193-213, and 214-234; these read LHGQ…VLVI, LPFI…GALV, INTT…AGLS, LVVG…AMFL, and GLFT…NYIG.

This sequence belongs to the ATPase A chain family. F-type ATPases have 2 components, CF(1) - the catalytic core - and CF(0) - the membrane proton channel. CF(1) has five subunits: alpha(3), beta(3), gamma(1), delta(1), epsilon(1). CF(0) has four main subunits: a, b, b' and c.

The protein resides in the plastid. It localises to the organellar chromatophore thylakoid membrane. In terms of biological role, key component of the proton channel; it plays a direct role in the translocation of protons across the membrane. The polypeptide is ATP synthase subunit a, organellar chromatophore (Paulinella chromatophora).